A 653-amino-acid chain; its full sequence is Leishmanolysin homolog (653 aa).

The N-terminal stretch at 1-44 (MHAPPTATRRSGPRRTHGIMARLVRLAAGVLVVTLVIGALTALS) is a signal peptide. Positions 45 to 113 (ADDAKTHPHK…ALAGDSAPDV (69 aa)) are cleaved as a propeptide — activation peptide. Intrachain disulfides connect Cys138/Cys155 and Cys203/Cys242. Zn(2+) is bound at residue His276. The active site involves Glu277. Zn(2+) is bound by residues His280 and His346. Cystine bridges form between Cys326–Cys398, Cys405–Cys468, Cys418–Cys437, Cys427–Cys502, Cys479–Cys524, Cys529–Cys579, and Cys549–Cys572. Asn383 and Asn409 each carry an N-linked (GlcNAc...) asparagine glycan. The N-linked (GlcNAc...) asparagine glycan is linked to Asn569. The tract at residues 590–631 (ESMTNSGSGSSRPAPVEPSGSGSGSSAATTAPSPTRDGSAAA) is disordered. The segment covering 591–600 (SMTNSGSGSS) has biased composition (polar residues). Residues 607–631 (PSGSGSGSSAATTAPSPTRDGSAAA) show a composition bias toward low complexity. Ser628 is lipidated: GPI-anchor amidated serine. A propeptide spans 629–653 (AAADRIAPRTAAVALLALAVAAACV) (removed in mature form).

This sequence belongs to the peptidase M8 family. The cofactor is Zn(2+).

The protein localises to the cell membrane. The catalysed reaction is Preference for hydrophobic residues at P1 and P1' and basic residues at P2' and P3'. A model nonapeptide is cleaved at -Ala-Tyr-|-Leu-Lys-Lys-.. Its function is as follows. Plays an integral role during the infection of macrophages in the mammalian host. In Crithidia fasciculata, this protein is Leishmanolysin homolog (gp63).